The following is an 847-amino-acid chain: Histidine decarboxylase (847 aa).

Positions 80 and 193 each coordinate substrate. N6-(pyridoxal phosphate)lysine is present on K304. Positions 575–605 (GNGATRTSTTNSYGHTTSAAQANSERQASIQ) are enriched in polar residues. Disordered regions lie at residues 575–662 (GNGA…RSSP), 769–798 (QSQSLGNNSSTESSSLSGGATPTPTPMSSL), and 813–847 (SQPMLSAHGIGEGQREQGSDSDATVCSTTSSMESL). The segment covering 606–616 (EDNEESPEETE) has biased composition (acidic residues). Composition is skewed to low complexity over residues 634–657 (SLSTPSRSCSSSSHSLIHSLTQSS) and 769–787 (QSQSLGNNSSTESSSLSGG). Residues 832-847 (DSDATVCSTTSSMESL) show a composition bias toward polar residues.

The protein belongs to the group II decarboxylase family. Homodimer. Pyridoxal 5'-phosphate is required as a cofactor. In terms of tissue distribution, localized primarily to the photoreceptors, in the eye.

The catalysed reaction is L-histidine + H(+) = histamine + CO2. Required in photoreceptor transmitter synthesis. Catlayzes the conversion of L-histidine to histamine. This Drosophila melanogaster (Fruit fly) protein is Histidine decarboxylase (Hdc).